We begin with the raw amino-acid sequence, 187 residues long: Threonylcarbamoyl-AMP synthase (187 aa).

The YrdC-like domain maps to 4–187 (TLDLDRAVAT…DARSGQILRD (184 aa)).

Belongs to the SUA5 family. TsaC subfamily.

Its subcellular location is the cytoplasm. It carries out the reaction L-threonine + hydrogencarbonate + ATP = L-threonylcarbamoyladenylate + diphosphate + H2O. Functionally, required for the formation of a threonylcarbamoyl group on adenosine at position 37 (t(6)A37) in tRNAs that read codons beginning with adenine. Catalyzes the conversion of L-threonine, HCO(3)(-)/CO(2) and ATP to give threonylcarbamoyl-AMP (TC-AMP) as the acyladenylate intermediate, with the release of diphosphate. This Xanthomonas euvesicatoria pv. vesicatoria (strain 85-10) (Xanthomonas campestris pv. vesicatoria) protein is Threonylcarbamoyl-AMP synthase.